Here is a 191-residue protein sequence, read N- to C-terminus: Cell division protein SepF (191 aa).

Low complexity predominate over residues 150–164 (TSSSPEEASPSSVST). Residues 150-191 (TSSSPEEASPSSVSTENTPQYSLGKNTTPEPAWGNSKLSAYS) are disordered. A compositionally biased stretch (polar residues) spans 165–178 (ENTPQYSLGKNTTP).

The protein belongs to the SepF family. As to quaternary structure, homodimer. Interacts with FtsZ.

The protein resides in the cytoplasm. Functionally, cell division protein that is part of the divisome complex and is recruited early to the Z-ring. Probably stimulates Z-ring formation, perhaps through the cross-linking of FtsZ protofilaments. Its function overlaps with FtsA. This chain is Cell division protein SepF, found in Prochlorococcus marinus (strain AS9601).